The primary structure comprises 151 residues: Large ribosomal subunit protein uL13 (151 aa).

Residues 126–151 (YPGPNHPHQAQKPEELTLNTIPNGDK) form a disordered region. The segment covering 142-151 (TLNTIPNGDK) has biased composition (polar residues).

It belongs to the universal ribosomal protein uL13 family. In terms of assembly, part of the 50S ribosomal subunit.

This protein is one of the early assembly proteins of the 50S ribosomal subunit, although it is not seen to bind rRNA by itself. It is important during the early stages of 50S assembly. The chain is Large ribosomal subunit protein uL13 from Crocosphaera subtropica (strain ATCC 51142 / BH68) (Cyanothece sp. (strain ATCC 51142)).